The following is a 59-amino-acid chain: uncharacterized protein (59 aa).

The protein localises to the mitochondrion. This is an uncharacterized protein from Ascobolus immersus.